The sequence spans 201 residues: MDLTLLWVLLPLVTVAWGQYGDYGYSYHQYHDYSDDGWVNLNRQGFSYQCPHGQVVVAVRSIFNKKEGSDRQWNYACMPTPQSLGEPTECWWEEINRAGMEWYQTCSNNGLVAGFQSRYFESVLDREWQFYCCRYSKRCPYSCWLTTEYPGHYGEEMDMISYNYDYYMRGATTTFSAVERDRQWKFIMCRMTDYDCEFANV.

Positions 1-18 (MDLTLLWVLLPLVTVAWG) are cleaved as a signal peptide. At Q19 the chain carries Pyrrolidone carboxylic acid. Y23 bears the Sulfotyrosine mark. 4 repeat units span residues 26 to 79 (SYHQ…ACMP), 70 to 75 (DRQWNY), 80 to 135 (TPQS…CCRY), and 125 to 130 (DREWQF). The segment at 26–135 (SYHQYHDYSD…REWQFYCCRY (110 aa)) is 2 X 53-55 AA tandem repeats. 5 cysteine pairs are disulfide-bonded: C50/C77, C90/C132, C106/C133, C139/C196, and C143/C189. A 3 X 6 AA tandem repeats of D-R-[EQ]-W-[NQK]-[FY] region spans residues 70–186 (DRQWNYACMP…AVERDRQWKF (117 aa)). Residues Y162, Y164, Y166, and Y167 each carry the sulfotyrosine modification. Residues 181–186 (DRQWKF) form a 2-3 repeat. Y194 carries the post-translational modification Sulfotyrosine.

This sequence belongs to the dermatopontin family. As to quaternary structure, interacts with TGFB1, DCN and collagen. Sulfated on tyrosine residue(s). As to expression, expressed in skeletal muscle, heart, pancreas, skin and cultured fibroblasts.

It is found in the secreted. The protein localises to the extracellular space. The protein resides in the extracellular matrix. Seems to mediate adhesion by cell surface integrin binding. May serve as a communication link between the dermal fibroblast cell surface and its extracellular matrix environment. Enhances TGFB1 activity. Inhibits cell proliferation. Accelerates collagen fibril formation, and stabilizes collagen fibrils against low-temperature dissociation. The sequence is that of Dermatopontin (DPT) from Bos taurus (Bovine).